The sequence spans 344 residues: uncharacterized protein (344 aa).

Residues 190 to 232 (SGKRVRSAKKSGADAARASEGATCDRASSESVSPTARPPAQAS) are disordered.

This is an uncharacterized protein from Treponema pallidum (strain Nichols).